The sequence spans 876 residues: MTDIDARLREDVHLLGELLGNTIRDQYGEAFLDKIEQIRKGAKADRRGSMDAELSASLNQLSEDELLPVARAFNQFLNLANIAEQYQLIHRREETQAAPFESRVLPELLARLRNEGHSAESLARQLARLEIELVLTAHPTEVARRTLIQKYDAIAAQLAAQDHRDLTTAEREQIHNTLQRLIAEAWHTEEIRRTRPTPVDEAKWGFAVIEHSLWQAIPHHMRKADQALFAATGLRLPLEAAPIRFASWMGGDRDGNPNVTAAVTREVLLLARWMAADLYLRDVDHLAAELSMQQASDALKARAGDSAEPYRAVLKQLRERLRATRNWAHASLTATTPAPADVLHNNRDLLDPLELCFNSLHECGMGVIADGPLLDCLRRAVTFGLFLVRLDVRQDSSRHSAAMTEITDYLGLGKYEEWDEEQRISFLTRELQNRRPLLPAHFKPSADTAEVLATCKEIAAAPGASLGSYVISMAGAASDVLAVQLLLKESGVLRPMRVVPLFETLADLDNAGPVIERLLLLPGYRARLQGPQEVMIGYSDSAKDAGTTAAAWAQYRAQERLVEICREQQVELLLFHGRGGTVGRGGGPAHAAILSQPPGSVAGRFRTTEQGEMIRFKFGLPDIAEQNLNLYLAAVLEATLLPPPPPTPEWRHLMDELAADGVAAYRAVVRENPQFVEYFRQSTPEQELGRLPLGSRPAKRRAGGIESLRAIPWIFGWTQTRLMLPAWLGWETALSKALERGEGELLGQMREQWPFFRTRIDMLEMVLAKADADIALSYDERLVEPDLLPLGAHLRDLLSQACSVVLGLTGQSQLLAHSPDTLEFIRLRNTYLDPLHLLQAELLARSRRQNVEQGSPVEQALLVSVAGIAAGLRNTG.

Catalysis depends on residues histidine 138 and lysine 543.

Belongs to the PEPCase type 1 family. Requires Mg(2+) as cofactor.

The catalysed reaction is oxaloacetate + phosphate = phosphoenolpyruvate + hydrogencarbonate. Its function is as follows. Forms oxaloacetate, a four-carbon dicarboxylic acid source for the tricarboxylic acid cycle. The sequence is that of Phosphoenolpyruvate carboxylase from Pseudomonas fluorescens (strain Pf0-1).